The primary structure comprises 119 residues: HTH-type transcriptional regulator SarX (119 aa).

The segment at residues 55-78 is a DNA-binding region (H-T-H motif); sequence LKTAMDELDLSRTKLLVSIRRLIE.

The protein belongs to the SarA family.

Its subcellular location is the cytoplasm. Its function is as follows. Involved in the regulation of virulence genes. Acts as a repressor of the agr locus and consequently targets genes regulated by the agr system such as sspA, hla and hlb. Binds directly to the agr promoter region. The protein is HTH-type transcriptional regulator SarX (sarX) of Staphylococcus aureus (strain bovine RF122 / ET3-1).